The chain runs to 726 residues: Delta-1-pyrroline-5-carboxylate synthase B (726 aa).

The glutamate 5-kinase stretch occupies residues 1 to 296 (MTEIDRSRAF…WAPVVDTTSR (296 aa)). Residues S60, D157, and N176 each coordinate substrate. ATP-binding positions include 196-197 (SD) and 236-242 (RGGMTAK). The interval 297–717 (DMAVAARESS…YTHKDLPVLQ (421 aa)) is gamma-glutamyl phosphate reductase.

This sequence in the N-terminal section; belongs to the glutamate 5-kinase family. The protein in the C-terminal section; belongs to the gamma-glutamyl phosphate reductase family.

It catalyses the reaction L-glutamate + ATP = L-glutamyl 5-phosphate + ADP. The catalysed reaction is L-glutamate 5-semialdehyde + phosphate + NADP(+) = L-glutamyl 5-phosphate + NADPH + H(+). It functions in the pathway amino-acid biosynthesis; L-proline biosynthesis; L-glutamate 5-semialdehyde from L-glutamate: step 1/2. The protein operates within amino-acid biosynthesis; L-proline biosynthesis; L-glutamate 5-semialdehyde from L-glutamate: step 2/2. Functionally, P5CS plays a key role in proline biosynthesis, leading to osmoregulation in plants. This Arabidopsis thaliana (Mouse-ear cress) protein is Delta-1-pyrroline-5-carboxylate synthase B (P5CSB).